Here is an 81-residue protein sequence, read N- to C-terminus: MNVDHEVNLLVEEIHRLGSKNADGKLSVKFGVLFRDDKCANLFEALVGTLKAAKRRKIVTYPGELLLQGVHDDVDIILLQD.

Methionine 1 carries the post-translational modification N-acetylmethionine.

Belongs to the costars family.

The polypeptide is Costars family protein ABRACL (ABRACL) (Homo sapiens (Human)).